A 149-amino-acid chain; its full sequence is Aquaporin-like protein 2 (149 aa).

Residues 1-35 (MSNESNDLEKNISHLDPTGVDNAYIPPEQPETKHS) form a disordered region. At 1-47 (MSNESNDLEKNISHLDPTGVDNAYIPPEQPETKHSRFNIDRDTLRNH) the chain is on the cytoplasmic side. A helical membrane pass occupies residues 48 to 68 (FIAAVGEFCGTFMFLWCAYVI). At 69-89 (CNVANHDVALTTEPEGSHPGQ) the chain is on the extracellular side. Residues 90-110 (LIMIALGFGFSVMFSIWCFWW) form a helical membrane-spanning segment. The Cytoplasmic segment spans residues 111 to 149 (GFEPSRFSLFVFGQSHLTSQMCSDVVSSDHCWDGCWWCR).

It belongs to the MIP/aquaporin (TC 1.A.8) family.

It is found in the endoplasmic reticulum membrane. The protein resides in the cell membrane. Water channel required to facilitate the transport of water across membranes. Involved in freeze tolerance, osmotolerance and cell flocculation in liquid cultures. Is non-functional in most laboratory strains. This Saccharomyces cerevisiae (strain JAY291) (Baker's yeast) protein is Aquaporin-like protein 2 (AQY2-2).